The primary structure comprises 549 residues: uncharacterized protein (549 aa).

The signal sequence occupies residues 1–19 (MNWRRIVWLLALVTLPTLA).

This is an uncharacterized protein from Escherichia coli (strain K12).